The primary structure comprises 527 residues: Dual specificity protein kinase shkA (527 aa).

The 260-residue stretch at 45-304 (ITTESILGDG…GIVSELEEII (260 aa)) folds into the Protein kinase domain. Residues 51–59 (LGDGSFGTV) and lysine 72 contribute to the ATP site. The Proton acceptor role is filled by aspartate 167. An SH2 domain is found at 424-513 (WFHGDISTSE…INTPCLGSRF (90 aa)).

The protein belongs to the protein kinase superfamily. TKL Ser/Thr protein kinase family. SH2 domain-containing protein kinase subfamily.

The protein resides in the membrane. It catalyses the reaction L-seryl-[protein] + ATP = O-phospho-L-seryl-[protein] + ADP + H(+). It carries out the reaction L-threonyl-[protein] + ATP = O-phospho-L-threonyl-[protein] + ADP + H(+). Its function is as follows. Required for proper chemotaxis and phagocytosis; proper spatiotemporal control of F-actin levels in chemotaxing cells. Negative regulator of the PI3K (phosphatidylinositol 3 kinase) pathway. Predominantly phosphorylates serines and threonines and tyrosines at a lower level. This Dictyostelium discoideum (Social amoeba) protein is Dual specificity protein kinase shkA (shkA).